The following is a 353-amino-acid chain: Photosystem II protein D1 (353 aa).

Thr2 bears the N-acetylthreonine mark. Thr2 is modified (phosphothreonine). A run of 3 helical transmembrane segments spans residues 29–46 (YIGW…TATS), 118–133 (HFLL…EWEL), and 142–156 (WIAI…AATA). His118 contacts chlorophyll a. Tyr126 provides a ligand contact to pheophytin a. [CaMn4O5] cluster contacts are provided by Asp170 and Glu189. A helical membrane pass occupies residues 197–218 (FHMLGVAGVFGGSLFSAMHGSL). His198 lines the chlorophyll a pocket. Residues His215 and 264–265 (SF) contribute to the a quinone site. His215 contributes to the Fe cation binding site. His272 is a binding site for Fe cation. A helical transmembrane segment spans residues 274-288 (FLAAWPVIGIWFTAL). Residues His332, Glu333, Asp342, and Ala344 each coordinate [CaMn4O5] cluster. The propeptide occupies 345–353 (TFEVSATNA).

Belongs to the reaction center PufL/M/PsbA/D family. In terms of assembly, PSII is composed of 1 copy each of membrane proteins PsbA, PsbB, PsbC, PsbD, PsbE, PsbF, PsbH, PsbI, PsbJ, PsbK, PsbL, PsbM, PsbT, PsbX, PsbY, PsbZ, Psb30/Ycf12, at least 3 peripheral proteins of the oxygen-evolving complex and a large number of cofactors. It forms dimeric complexes. The cofactor is The D1/D2 heterodimer binds P680, chlorophylls that are the primary electron donor of PSII, and subsequent electron acceptors. It shares a non-heme iron and each subunit binds pheophytin, quinone, additional chlorophylls, carotenoids and lipids. D1 provides most of the ligands for the Mn4-Ca-O5 cluster of the oxygen-evolving complex (OEC). There is also a Cl(-1) ion associated with D1 and D2, which is required for oxygen evolution. The PSII complex binds additional chlorophylls, carotenoids and specific lipids.. Tyr-161 forms a radical intermediate that is referred to as redox-active TyrZ, YZ or Y-Z. Post-translationally, C-terminally processed by CTPA; processing is essential to allow assembly of the oxygen-evolving complex and thus photosynthetic growth.

The protein localises to the plastid membrane. It carries out the reaction 2 a plastoquinone + 4 hnu + 2 H2O = 2 a plastoquinol + O2. Its function is as follows. Photosystem II (PSII) is a light-driven water:plastoquinone oxidoreductase that uses light energy to abstract electrons from H(2)O, generating O(2) and a proton gradient subsequently used for ATP formation. It consists of a core antenna complex that captures photons, and an electron transfer chain that converts photonic excitation into a charge separation. The D1/D2 (PsbA/PsbD) reaction center heterodimer binds P680, the primary electron donor of PSII as well as several subsequent electron acceptors. In Cuscuta gronovii (Common dodder), this protein is Photosystem II protein D1.